The primary structure comprises 89 residues: Small ribosomal subunit protein uS14A (89 aa).

Belongs to the universal ribosomal protein uS14 family. Part of the 30S ribosomal subunit. Contacts proteins S3 and S10.

Its function is as follows. Binds 16S rRNA, required for the assembly of 30S particles and may also be responsible for determining the conformation of the 16S rRNA at the A site. The sequence is that of Small ribosomal subunit protein uS14A from Streptococcus equi subsp. zooepidemicus (strain MGCS10565).